A 77-amino-acid polypeptide reads, in one-letter code: MKLIIFTGLVLFAIVSLIEAQAENEKACLPQYQVRTDAPGNCCSNLVCDCYGRYKSGARIGRNCFCLQKGVIYKREN.

The first 20 residues, 1 to 20, serve as a signal peptide directing secretion; sequence MKLIIFTGLVLFAIVSLIEA. Residues 21-26 constitute a propeptide that is removed on maturation; sequence QAENEK.

It belongs to the neurotoxin 19 (CSTX) family. 08 (U8-Lctx) subfamily. Contains 4 disulfide bonds. In terms of tissue distribution, expressed by the venom gland.

The protein resides in the secreted. This is U8-lycotoxin-Ls1w from Lycosa singoriensis (Wolf spider).